The chain runs to 1486 residues: Chromosome partition protein MukB (1486 aa).

Residue 34-41 (GGNGAGKS) coordinates ATP. Coiled coils occupy residues 326–418 (LEAD…QYNQ), 444–480 (LETF…QAYQ), and 509–603 (RHLA…RAPV). The segment at 666–783 (PGGSEDQRLN…EVPLFGRAAR (118 aa)) is flexible hinge. Coiled coils occupy residues 835–923 (EAEI…AKLE), 977–1115 (EMLS…TAKA), and 1209–1266 (VEAI…QNVS).

This sequence belongs to the SMC family. MukB subfamily. Homodimerization via its hinge domain. Binds to DNA via its C-terminal region. Interacts, and probably forms a ternary complex, with MukE and MukF via its C-terminal region. The complex formation is stimulated by calcium or magnesium. Interacts with tubulin-related protein FtsZ.

It is found in the cytoplasm. The protein resides in the nucleoid. Functionally, plays a central role in chromosome condensation, segregation and cell cycle progression. Functions as a homodimer, which is essential for chromosome partition. Involved in negative DNA supercoiling in vivo, and by this means organize and compact chromosomes. May achieve or facilitate chromosome segregation by condensation DNA from both sides of a centrally located replisome during cell division. This is Chromosome partition protein MukB from Shigella flexneri serotype 5b (strain 8401).